The following is a 91-amino-acid chain: Gene 76 protein (91 aa).

Residues 58–81 (ELPSCDESPKGEARRDNDNRDGGK) form a disordered region.

The chain is Gene 76 protein (76) from Mycobacterium phage L5 (Mycobacteriophage L5).